A 512-amino-acid chain; its full sequence is Glutathione-binding protein GsiB (512 aa).

A signal peptide spans 1 to 26 (MTQFITHKWLAALGLASSIAAFPALA).

This sequence belongs to the bacterial solute-binding protein 5 family. In terms of assembly, the complex is composed of two ATP-binding proteins (GsiA), two transmembrane proteins (GsiC and GsiD) and a solute-binding protein (GsiB).

The protein resides in the periplasm. Its function is as follows. Part of the ABC transporter complex GsiABCD involved in glutathione import. Binds glutathione. The protein is Glutathione-binding protein GsiB of Salmonella choleraesuis (strain SC-B67).